Here is a 474-residue protein sequence, read N- to C-terminus: Nitrogenase vanadium-iron protein alpha chain (474 aa).

Cysteine 49, cysteine 75, and cysteine 138 together coordinate [8Fe-7S] cluster. Cysteine 257 and histidine 423 together coordinate [7Fe-V-9S-C-homocitryl] cluster.

Belongs to the NifD/NifK/NifE/NifN family. Hexamer of two alpha, two beta, and two delta chains. [8Fe-7S] cluster is required as a cofactor. The cofactor is [7Fe-V-9S-C-homocitryl] cluster.

It catalyses the reaction N2 + 8 reduced [2Fe-2S]-[ferredoxin] + 16 ATP + 16 H2O = H2 + 8 oxidized [2Fe-2S]-[ferredoxin] + 2 NH4(+) + 16 ADP + 16 phosphate + 6 H(+). Its function is as follows. This vanadium-iron protein is part of the nitrogenase complex that catalyzes the key enzymatic reactions in nitrogen fixation. The polypeptide is Nitrogenase vanadium-iron protein alpha chain (vnfD) (Azotobacter vinelandii).